We begin with the raw amino-acid sequence, 271 residues long: Short-chain dehydrogenase ptmH (271 aa).

Residues I8, T34, K40, D56, N84, Y148, K152, V181, and T183 each contribute to the NADP(+) site. The active-site Proton acceptor is Y148. Residue K152 is the Lowers pKa of active site Tyr of the active site.

It belongs to the short-chain dehydrogenases/reductases (SDR) family.

Its pathway is secondary metabolite biosynthesis. In terms of biological role, short-chain dehydrogenase; part of the gene cluster that mediates the biosynthesis of the indole diterpenes penitrems. The geranylgeranyl diphosphate (GGPP) synthase ptmG catalyzes the first step in penitrem biosynthesis via conversion of farnesyl pyrophosphate and isopentyl pyrophosphate into geranylgeranyl pyrophosphate (GGPP). Condensation of indole-3-glycerol phosphate with GGPP by the prenyl transferase ptmC then forms 3-geranylgeranylindole (3-GGI). Epoxidation by the FAD-dependent monooxygenase ptmM leads to a epoxidized-GGI that is substrate of the terpene cyclase ptmB for cyclization to yield paspaline. Paspaline is subsequently converted to 13-desoxypaxilline by the cytochrome P450 monooxygenase ptmP, the latter being then converted to paxilline by the cytochrome P450 monooxygenase ptmQ. Paxilline is converted to beta-paxitriol via C-10 ketoreduction by the short-chain dehydrogenase ptmH which can be monoprenylated at the C-20 by the indole diterpene prenyltransferase ptmD. A two-step elimination (acetylation and elimination) process performed by the O-acetyltransferase ptmV and ptmI leads to the production of the prenylated form of penijanthine. The FAD-linked oxidoreductase ptmO then converts the prenylated form of penijanthine into PC-M5 which is in turn transformed into PC-M4 by the aromatic dimethylallyltransferase ptmE. Five sequential oxidative transformations performed by the cytochrome P450 monooxygenases ptmK, ptmU, ptmL, ptmN and ptmJ yield the various penitrem compounds. PtmK, ptmU and ptmM are involved in the formation of the key bicyclic ring of penitrem C via the formation of the intermediates secopenitrem D and penitrem D. PtmL catalyzes the epoxidation of penitrem D and C to yield penitrem B and F, respectively. PtmJ catalyzes the last benzylic hydroxylation to convert penitrem B to prenitrem E and penitrem F to penitrem A. The polypeptide is Short-chain dehydrogenase ptmH (Penicillium ochrochloron).